The chain runs to 115 residues: Protein V2 (115 aa).

The protein belongs to the geminiviridae protein AV2/V2 family. Interacts with host SGS3.

The protein resides in the host cytoplasm. The protein localises to the host perinuclear region. Through its interaction with host SGS3, acts as a suppressor of RNA-mediated gene silencing, also known as post-transcriptional gene silencing (PTGS), a mechanism of plant viral defense that limits the accumulation of viral RNAs. The chain is Protein V2 from Tomato yellow leaf curl Sardinia virus (isolate Spain-2) (TYLCSV).